Reading from the N-terminus, the 436-residue chain is Bifunctional protein GlmU (436 aa).

A pyrophosphorylase region spans residues 1–226 (MNEISIIILA…ETNFMGINDK (226 aa)). UDP-N-acetyl-alpha-D-glucosamine contacts are provided by residues 9–12 (LAAG), lysine 23, glutamine 75, and 82–83 (GT). Aspartate 105 serves as a coordination point for Mg(2+). 4 residues coordinate UDP-N-acetyl-alpha-D-glucosamine: glycine 138, glutamate 152, asparagine 167, and asparagine 224. Asparagine 224 contacts Mg(2+). Residues 227-247 (FALSIAEEIMQNRIKENLMKN) are linker. The segment at 248–436 (GVIMSLPDTI…YKFFGKNDEK (189 aa)) is N-acetyltransferase. Positions 311 and 328 each coordinate UDP-N-acetyl-alpha-D-glucosamine. Histidine 339 functions as the Proton acceptor in the catalytic mechanism. Residues tyrosine 342 and asparagine 353 each coordinate UDP-N-acetyl-alpha-D-glucosamine. Acetyl-CoA contacts are provided by residues 362 to 363 (NY), serine 381, alanine 399, and arginine 416.

It in the N-terminal section; belongs to the N-acetylglucosamine-1-phosphate uridyltransferase family. This sequence in the C-terminal section; belongs to the transferase hexapeptide repeat family. As to quaternary structure, homotrimer. The cofactor is Mg(2+).

The protein localises to the cytoplasm. The catalysed reaction is alpha-D-glucosamine 1-phosphate + acetyl-CoA = N-acetyl-alpha-D-glucosamine 1-phosphate + CoA + H(+). It catalyses the reaction N-acetyl-alpha-D-glucosamine 1-phosphate + UTP + H(+) = UDP-N-acetyl-alpha-D-glucosamine + diphosphate. It participates in nucleotide-sugar biosynthesis; UDP-N-acetyl-alpha-D-glucosamine biosynthesis; N-acetyl-alpha-D-glucosamine 1-phosphate from alpha-D-glucosamine 6-phosphate (route II): step 2/2. Its pathway is nucleotide-sugar biosynthesis; UDP-N-acetyl-alpha-D-glucosamine biosynthesis; UDP-N-acetyl-alpha-D-glucosamine from N-acetyl-alpha-D-glucosamine 1-phosphate: step 1/1. The protein operates within bacterial outer membrane biogenesis; LPS lipid A biosynthesis. Catalyzes the last two sequential reactions in the de novo biosynthetic pathway for UDP-N-acetylglucosamine (UDP-GlcNAc). The C-terminal domain catalyzes the transfer of acetyl group from acetyl coenzyme A to glucosamine-1-phosphate (GlcN-1-P) to produce N-acetylglucosamine-1-phosphate (GlcNAc-1-P), which is converted into UDP-GlcNAc by the transfer of uridine 5-monophosphate (from uridine 5-triphosphate), a reaction catalyzed by the N-terminal domain. The polypeptide is Bifunctional protein GlmU (Campylobacter fetus subsp. fetus (strain 82-40)).